Reading from the N-terminus, the 325-residue chain is RNA ligase 1 (325 aa).

The cofactor is Mg(2+). It depends on Mn(2+) as a cofactor. Post-translationally, AMPylates itself (auto-AMPylation).

It carries out the reaction ATP + (ribonucleotide)n-3'-hydroxyl + 5'-phospho-(ribonucleotide)m = (ribonucleotide)n+m + AMP + diphosphate.. Functions as an RNA ligase, in vitro. The ligation reaction entails three nucleotidyl transfer steps. In the first step, the RNA ligase reacts with ATP in the absence of nucleic acid to form a covalent ligase-AMP intermediate and release pyrophosphate. In step 2, the ligase-AMP binds to the nucleic acid and transfers the adenylate to the 5'-PO4 terminus to form an adenylylated intermediate. In step 3, the RNA ligase directs the attack of the 3'-OH on the 5'-phosphoanhydride linkage, resulting in a repaired 3'-5' phosphodiester and release of AMP. Exhibits selectivity for single-stranded RNA substrates and may not have nick-sealing activity on double-stranded DNA-RNA hybrids. May play a role in maintaining RNA integrity under stress conditions, for example in response to reactive oxygen species (ROS). The chain is RNA ligase 1 from Danio rerio (Zebrafish).